A 146-amino-acid polypeptide reads, in one-letter code: MSLAAGREATLLAFDYGEKRIGVAVGNSLTKSARPLVIVQNRSREYRFEAVGKLIAEWKPNALVVGLPMHPDGTPHEMTQLAKRFGNQLNGRFNLPVTWIDERYSSVEAKAEIRAGNGRADMLDAEAASIILQQYLDGLSDDHEFH.

It belongs to the YqgF nuclease family.

It localises to the cytoplasm. Functionally, could be a nuclease involved in processing of the 5'-end of pre-16S rRNA. This Paraburkholderia xenovorans (strain LB400) protein is Putative pre-16S rRNA nuclease.